Here is a 157-residue protein sequence, read N- to C-terminus: Methylglyoxal synthase (157 aa).

In terms of domain architecture, MGS-like spans 1-157 (MSKVKNIAVV…DFSSYTQRKL (157 aa)). Substrate is bound by residues His-12, Lys-16, 38–41 (TGTT), and 71–72 (SG). Residue Asp-77 is the Proton donor/acceptor of the active site. A substrate-binding site is contributed by His-104.

It belongs to the methylglyoxal synthase family.

It carries out the reaction dihydroxyacetone phosphate = methylglyoxal + phosphate. Its function is as follows. Catalyzes the formation of methylglyoxal from dihydroxyacetone phosphate. The sequence is that of Methylglyoxal synthase from Maridesulfovibrio salexigens (strain ATCC 14822 / DSM 2638 / NCIMB 8403 / VKM B-1763) (Desulfovibrio salexigens).